A 437-amino-acid polypeptide reads, in one-letter code: Serine hydroxymethyltransferase (437 aa).

(6S)-5,6,7,8-tetrahydrofolate-binding positions include Leu-130 and 134–136 (GHL). N6-(pyridoxal phosphate)lysine is present on Lys-239.

Belongs to the SHMT family. As to quaternary structure, homodimer. It depends on pyridoxal 5'-phosphate as a cofactor.

The protein localises to the cytoplasm. The enzyme catalyses (6R)-5,10-methylene-5,6,7,8-tetrahydrofolate + glycine + H2O = (6S)-5,6,7,8-tetrahydrofolate + L-serine. It functions in the pathway one-carbon metabolism; tetrahydrofolate interconversion. The protein operates within amino-acid biosynthesis; glycine biosynthesis; glycine from L-serine: step 1/1. Its function is as follows. Catalyzes the reversible interconversion of serine and glycine with tetrahydrofolate (THF) serving as the one-carbon carrier. This reaction serves as the major source of one-carbon groups required for the biosynthesis of purines, thymidylate, methionine, and other important biomolecules. Also exhibits THF-independent aldolase activity toward beta-hydroxyamino acids, producing glycine and aldehydes, via a retro-aldol mechanism. The chain is Serine hydroxymethyltransferase from Bartonella tribocorum (strain CIP 105476 / IBS 506).